We begin with the raw amino-acid sequence, 678 residues long: Methionine--tRNA ligase (678 aa).

Positions P14–H24 match the 'HIGH' region motif. The Zn(2+) site is built by C145, C148, C158, and C161. Positions K331–S335 match the 'KMSKS' region motif. Residue K334 coordinates ATP. The tRNA-binding domain occupies A576 to K678.

Belongs to the class-I aminoacyl-tRNA synthetase family. MetG type 1 subfamily. As to quaternary structure, homodimer. Zn(2+) serves as cofactor.

It is found in the cytoplasm. The catalysed reaction is tRNA(Met) + L-methionine + ATP = L-methionyl-tRNA(Met) + AMP + diphosphate. Is required not only for elongation of protein synthesis but also for the initiation of all mRNA translation through initiator tRNA(fMet) aminoacylation. This Ectopseudomonas mendocina (strain ymp) (Pseudomonas mendocina) protein is Methionine--tRNA ligase.